A 397-amino-acid chain; its full sequence is Mycinamicin IV hydroxylase/epoxidase (397 aa).

The tract at residues 63-86 (RGPSMTRDEPRTRPEMVKGGLLSM) is disordered. The segment covering 68–78 (TRDEPRTRPEM) has biased composition (basic and acidic residues). Residue glycine 81 participates in substrate binding. Heme is bound by residues histidine 91, arginine 95, arginine 288, histidine 344, and cysteine 346.

The protein belongs to the cytochrome P450 family. It depends on heme as a cofactor.

It participates in antibiotic biosynthesis; mycinamicin biosynthesis. In terms of biological role, involved in the biosynthesis of mycinamicin, a 16-membered macrolide antibiotic. Catalyzes consecutive hydroxylation (at C14) and epoxidation (at C12-C13) reactions with mycinamicin IV as initial substrate, leading to mycinamicin II. These reactions require prior dimethylation of 6-deoxyallose to mycinose for effective conversion by the dual function MycG enzyme. In Micromonospora griseorubida, this protein is Mycinamicin IV hydroxylase/epoxidase.